A 740-amino-acid polypeptide reads, in one-letter code: NAD(P)H-quinone oxidoreductase subunit 5, chloroplastic (740 aa).

A run of 16 helical transmembrane segments spans residues 9–29 (WIIPFVPLLVTMLIGLGLLLI), 39–59 (IWAFPAVLLLSIVMVFSTKLA), 89–109 (IDPLTSIMSILITTVGIMVLI), 125–145 (FAYMSFFNTSMLGLVTSPNLI), 147–167 (IHIFWELVGMCSYLLIGFWFT), 185–205 (GDFGLLLGILGFYLITGSFEF), 231–251 (AFLLFLGAVAKSAQFPLHVWL), 259–279 (TPISALIHAATMVAAGIFLVA), 281–301 (LLPLFIGIPYIMNIISLIGLI), 328–348 (LGYIMLALGIGSYRAALFHLI), 355–375 (ALLFLGSGSIIHSMEPIVGYS), 397–417 (TTFFLGTLSLCGIPPLACFWS), 426–446 (WLYSPIFATIACYTAGLTAFY), 548–568 (TMLFPLLILAIFTLFVGCIGI), 607–627 (FYSVSIAYFGIFIASVLYGSV), and 719–739 (GRISSYLFLYLACVSIVLLLV).

The protein belongs to the complex I subunit 5 family. In terms of assembly, NDH is composed of at least 16 different subunits, 5 of which are encoded in the nucleus.

It localises to the plastid. The protein localises to the chloroplast thylakoid membrane. It carries out the reaction a plastoquinone + NADH + (n+1) H(+)(in) = a plastoquinol + NAD(+) + n H(+)(out). The enzyme catalyses a plastoquinone + NADPH + (n+1) H(+)(in) = a plastoquinol + NADP(+) + n H(+)(out). In terms of biological role, NDH shuttles electrons from NAD(P)H:plastoquinone, via FMN and iron-sulfur (Fe-S) centers, to quinones in the photosynthetic chain and possibly in a chloroplast respiratory chain. The immediate electron acceptor for the enzyme in this species is believed to be plastoquinone. Couples the redox reaction to proton translocation, and thus conserves the redox energy in a proton gradient. The sequence is that of NAD(P)H-quinone oxidoreductase subunit 5, chloroplastic (ndhF) from Nuphar advena (Common spatterdock).